The following is a 531-amino-acid chain: Keratin, type II cytoskeletal 79 (531 aa).

Polar residues predominate over residues 1-12 (MRSSLSRQTFST). Residues 1-55 (MRSSLSRQTFSTKGGFSSNSASGGGGSRMRTSYSSVTMSRGSGGGGGVRSGSSSG) form a disordered region. Residues 1–138 (MRSSLSRQTF…DPEIQRVRTQ (138 aa)) are head. Residues 28–40 (RMRTSYSSVTMSR) show a composition bias toward low complexity. Gly residues predominate over residues 41–55 (GSGGGGGVRSGSSSG). A coil 1A region spans residues 139 to 174 (EREQIKTLNNKFASFIDKVRFLEQQNKVLETKWALL). Positions 139-453 (EREQIKTLNN…KLLESEESRM (315 aa)) constitute an IF rod domain. The segment at 175–194 (QEQSQNTGVARSLEPFFENY) is linker 1. Residues 195-286 (LSTLRRQLDT…QLFEMELSQV (92 aa)) form a coil 1B region. The tract at residues 287-310 (QTNVSDTNVILSMDNNRNLDLDSI) is linker 12. A coil 2 region spans residues 311–449 (IAEVKAQYEL…ATYRKLLESE (139 aa)). The interval 450–531 (ESRMSGDCPS…TTVKTSSRRY (82 aa)) is tail.

It belongs to the intermediate filament family. In terms of assembly, heterotetramer of two type I and two type II keratins.

This Mus musculus (Mouse) protein is Keratin, type II cytoskeletal 79 (Krt79).